A 405-amino-acid polypeptide reads, in one-letter code: Proline-rich P65 protein (405 aa).

A disordered region spans residues 1–58 (MDINKPGWNQSDQQATAYDPNQQQYYGDGSTYYDPDQAVDPNQAYYPDPNTYPDAAAY). Residues 7–25 (GWNQSDQQATAYDPNQQQY) show a composition bias toward polar residues. A run of 12 repeats spans residues 40-45 (DPNQAY), 75-80 (DPNQAY), 83-87 (DPNAY), 89-93 (DPNAY), 95-99 (DPNAY), 101-105 (DPNAY), 107-111 (DPNAY), 119-123 (DPNAY), 140-145 (DPNQAY), 148-152 (DPNAY), 154-158 (DPNAY), and 168-172 (DPNAY). Residues 40 to 172 (DPNQAYYPDP…YVTSTDPNAY (133 aa)) form a 12 X 5 AA repeats of D-P-N-Q-A-Y region.

Post-translationally, the N-terminus is blocked.

It localises to the cell membrane. The polypeptide is Proline-rich P65 protein (p65) (Mycoplasma pneumoniae (strain ATCC 29342 / M129 / Subtype 1) (Mycoplasmoides pneumoniae)).